Here is a 28-residue protein sequence, read N- to C-terminus: Potassium channel toxin alpha-KTx 13.2 (28 aa).

Disulfide bonds link Cys-2–Cys-19, Cys-6–Cys-24, and Cys-10–Cys-26. The tract at residues 17–24 (IKCINGSC) is interaction with Ca(2+)-activated K(+) channels.

This sequence belongs to the short scorpion toxin superfamily. Potassium channel inhibitor family. Alpha-KTx 13 subfamily. As to expression, expressed by the venom gland.

It localises to the secreted. In terms of biological role, potent and selective inhibitor of Kv1.2/KCNA2 potassium channels. The protein is Potassium channel toxin alpha-KTx 13.2 of Orthochirus scrobiculosus (Central Asian scorpion).